Reading from the N-terminus, the 426-residue chain is Lipase 7 (426 aa).

The N-terminal stretch at 1-15 (MFVFLALITLTTCLQ) is a signal peptide. N-linked (GlcNAc...) asparagine glycosylation is found at Asn-74, Asn-175, and Asn-179. 2 cysteine pairs are disulfide-bonded: Cys-108–Cys-269 and Cys-341–Cys-385. The active-site Charge relay system is Ser-190. Residue Asn-223 is glycosylated (N-linked (GlcNAc...) asparagine). His-358 functions as the Charge relay system in the catalytic mechanism. N-linked (GlcNAc...) asparagine glycosylation is found at Asn-378, Asn-379, Asn-422, and Asn-423.

It belongs to the AB hydrolase superfamily. Lipase family. Class Lip subfamily.

It catalyses the reaction a triacylglycerol + H2O = a diacylglycerol + a fatty acid + H(+). Secreted lipase that is able to hydrolze both the neutral triacylglycerols and the monopalmitate ester Tween 40, allowing the use of hydrolyzed products as carbon sources. Has broad lipolytic activity, which may be important for colonization and subsequent infection, therefore contributing to the persistence and virulence in human tissue. The polypeptide is Lipase 7 (Candida albicans (strain SC5314 / ATCC MYA-2876) (Yeast)).